We begin with the raw amino-acid sequence, 449 residues long: Na(+)-translocating NADH-quinone reductase subunit A (449 aa).

Belongs to the NqrA family. Composed of six subunits; NqrA, NqrB, NqrC, NqrD, NqrE and NqrF.

The catalysed reaction is a ubiquinone + n Na(+)(in) + NADH + H(+) = a ubiquinol + n Na(+)(out) + NAD(+). NQR complex catalyzes the reduction of ubiquinone-1 to ubiquinol by two successive reactions, coupled with the transport of Na(+) ions from the cytoplasm to the periplasm. NqrA to NqrE are probably involved in the second step, the conversion of ubisemiquinone to ubiquinol. The chain is Na(+)-translocating NADH-quinone reductase subunit A from Serratia proteamaculans (strain 568).